Reading from the N-terminus, the 295-residue chain is Inositol polyphosphate multikinase IPK2 (295 aa).

The interval 1 to 21 is disordered; sequence MASDLRPPEHQVAGHRASADK.

The protein belongs to the inositol phosphokinase (IPK) family.

The catalysed reaction is 1D-myo-inositol 1,4,5-trisphosphate + 2 ATP = 1D-myo-inositol 1,3,4,5,6-pentakisphosphate + 2 ADP + 2 H(+). It carries out the reaction 1D-myo-inositol 1,3,4,6-tetrakisphosphate + ATP = 1D-myo-inositol 1,3,4,5,6-pentakisphosphate + ADP + H(+). Its function is as follows. Inositol phosphate kinase with a broad substrate specificity. Phosphorylates inositol 1,4,5-trisphosphate (Ins(1,4,5)P3), inositol 1,4,5,6-tetrakisphosphate (Ins(1,4,5,6)P4), inositol 1,3,4,5-tetrakisphosphate (Ins(1,3,4,5)P4), inositol 1,3,4,6-tetrakisphosphate (Ins(1,3,4,6)P4) and inositol 1,2,3,4,6-pentakisphosphate (Ins(1,2,3,4,6)P5) but not inositol 1,4-bisphosphate (Ins(1,4)P2), inositol 1,3,4-trisphosphate (Ins(1,3,4)P3), inositol 1,2,6-trisphosphate (Ins(1,2,6)P3), inositol 3,4,5,6-tetrakisphosphate (Ins(3,4,5,6)P4), inositol 1,3,4,5,6-pentakisphosphate (Ins(1,3,4,5,6)P5), inositol 1,2,4,5,6-pentakisphosphate (Ins(1,2,4,5,6)P5) or inositol hexakisphosphate (InsP6). Regulates pollen and root development probably through the regulation of InsP3-mediated calcium accumulation. The protein is Inositol polyphosphate multikinase IPK2 of Oryza sativa subsp. indica (Rice).